Reading from the N-terminus, the 73-residue chain is Probable movement protein p8 (73 aa).

Over residues 1-12 (MSTVETPAQDTL) the composition is skewed to polar residues. Positions 1–48 (MSTVETPAQDTLATKEPNKTGAKDRQQARSARLSVAAGAGRTALSQRD) are disordered. The span at 16 to 27 (EPNKTGAKDRQQ) shows a compositional bias: basic and acidic residues.

The protein belongs to the carmovirus/necrovirus/panicovirus movement protein p8 family.

The protein resides in the host cell wall. Its function is as follows. Cell-to-cell movement. The protein is Probable movement protein p8 of Muhlenbergia (Blackwell switchgrass).